The sequence spans 418 residues: L-rhamnose isomerase (418 aa).

The Mn(2+) site is built by His-262, Asp-294, and Asp-296.

The protein belongs to the rhamnose isomerase family. As to quaternary structure, homotetramer. Mn(2+) is required as a cofactor.

Its subcellular location is the cytoplasm. The enzyme catalyses L-rhamnopyranose = L-rhamnulose. It functions in the pathway carbohydrate degradation; L-rhamnose degradation; glycerone phosphate from L-rhamnose: step 1/3. Functionally, catalyzes the interconversion of L-rhamnose and L-rhamnulose. This chain is L-rhamnose isomerase, found in Yersinia pestis bv. Antiqua (strain Antiqua).